The following is a 353-amino-acid chain: Probable dual-specificity RNA methyltransferase RlmN (353 aa).

E90 functions as the Proton acceptor in the catalytic mechanism. The Radical SAM core domain occupies 96–326 (YKHGNSICIS…VTTRREMGSD (231 aa)). Cysteines 103 and 331 form a disulfide. Residues C110, C114, and C117 each contribute to the [4Fe-4S] cluster site. S-adenosyl-L-methionine contacts are provided by residues 157-158 (GE), S189, 212-214 (SLH), and N288. The S-methylcysteine intermediate role is filled by C331.

This sequence belongs to the radical SAM superfamily. RlmN family. [4Fe-4S] cluster is required as a cofactor.

The protein resides in the cytoplasm. It catalyses the reaction adenosine(2503) in 23S rRNA + 2 reduced [2Fe-2S]-[ferredoxin] + 2 S-adenosyl-L-methionine = 2-methyladenosine(2503) in 23S rRNA + 5'-deoxyadenosine + L-methionine + 2 oxidized [2Fe-2S]-[ferredoxin] + S-adenosyl-L-homocysteine. The catalysed reaction is adenosine(37) in tRNA + 2 reduced [2Fe-2S]-[ferredoxin] + 2 S-adenosyl-L-methionine = 2-methyladenosine(37) in tRNA + 5'-deoxyadenosine + L-methionine + 2 oxidized [2Fe-2S]-[ferredoxin] + S-adenosyl-L-homocysteine. Its function is as follows. Specifically methylates position 2 of adenine 2503 in 23S rRNA and position 2 of adenine 37 in tRNAs. The polypeptide is Probable dual-specificity RNA methyltransferase RlmN (Clostridium beijerinckii (strain ATCC 51743 / NCIMB 8052) (Clostridium acetobutylicum)).